The following is a 180-amino-acid chain: Large ribosomal subunit protein uL5 (180 aa).

Belongs to the universal ribosomal protein uL5 family. Part of the 50S ribosomal subunit; part of the 5S rRNA/L5/L18/L25 subcomplex. Contacts the 5S rRNA and the P site tRNA. Forms a bridge to the 30S subunit in the 70S ribosome.

This is one of the proteins that bind and probably mediate the attachment of the 5S RNA into the large ribosomal subunit, where it forms part of the central protuberance. In the 70S ribosome it contacts protein S13 of the 30S subunit (bridge B1b), connecting the 2 subunits; this bridge is implicated in subunit movement. Contacts the P site tRNA; the 5S rRNA and some of its associated proteins might help stabilize positioning of ribosome-bound tRNAs. This Chlamydia abortus (strain DSM 27085 / S26/3) (Chlamydophila abortus) protein is Large ribosomal subunit protein uL5.